The following is a 267-amino-acid chain: L-aspartate dehydrogenase (267 aa).

The NAD(+) site is built by Ala124 and Asn190. His218 is an active-site residue.

It belongs to the L-aspartate dehydrogenase family.

It carries out the reaction L-aspartate + NADP(+) + H2O = oxaloacetate + NH4(+) + NADPH + H(+). The catalysed reaction is L-aspartate + NAD(+) + H2O = oxaloacetate + NH4(+) + NADH + H(+). It functions in the pathway cofactor biosynthesis; NAD(+) biosynthesis; iminoaspartate from L-aspartate (dehydrogenase route): step 1/1. Functionally, specifically catalyzes the NAD or NADP-dependent dehydrogenation of L-aspartate to iminoaspartate. The protein is L-aspartate dehydrogenase of Methanococcus maripaludis (strain C5 / ATCC BAA-1333).